A 189-amino-acid polypeptide reads, in one-letter code: Translation initiation factor IF-3 (189 aa).

This sequence belongs to the IF-3 family. As to quaternary structure, monomer.

The protein localises to the cytoplasm. Functionally, IF-3 binds to the 30S ribosomal subunit and shifts the equilibrium between 70S ribosomes and their 50S and 30S subunits in favor of the free subunits, thus enhancing the availability of 30S subunits on which protein synthesis initiation begins. This is Translation initiation factor IF-3 from Corynebacterium glutamicum (strain R).